The following is a 431-amino-acid chain: Glutamate-1-semialdehyde 2,1-aminomutase (431 aa).

N6-(pyridoxal phosphate)lysine is present on Lys269.

It belongs to the class-III pyridoxal-phosphate-dependent aminotransferase family. HemL subfamily. In terms of assembly, homodimer. It depends on pyridoxal 5'-phosphate as a cofactor.

The protein localises to the cytoplasm. It carries out the reaction (S)-4-amino-5-oxopentanoate = 5-aminolevulinate. It functions in the pathway porphyrin-containing compound metabolism; protoporphyrin-IX biosynthesis; 5-aminolevulinate from L-glutamyl-tRNA(Glu): step 2/2. The protein operates within porphyrin-containing compound metabolism; chlorophyll biosynthesis. This Chlorobium chlorochromatii (strain CaD3) protein is Glutamate-1-semialdehyde 2,1-aminomutase.